We begin with the raw amino-acid sequence, 486 residues long: Cardiolipin synthase A (486 aa).

2 consecutive transmembrane segments (helical) span residues 3 to 23 (TVYT…IAGV) and 38 to 58 (MAWL…YLAV). 2 consecutive PLD phosphodiesterase domains span residues 219–246 (MDLR…VDPR) and 399–426 (EGGL…DMRS). Residues H224, K226, D231, H404, K406, and D411 contribute to the active site.

Belongs to the phospholipase D family. Cardiolipin synthase subfamily. ClsA sub-subfamily.

Its subcellular location is the cell inner membrane. The enzyme catalyses 2 a 1,2-diacyl-sn-glycero-3-phospho-(1'-sn-glycerol) = a cardiolipin + glycerol. In terms of biological role, catalyzes the reversible phosphatidyl group transfer from one phosphatidylglycerol molecule to another to form cardiolipin (CL) (diphosphatidylglycerol) and glycerol. In Shigella flexneri, this protein is Cardiolipin synthase A.